The chain runs to 500 residues: Lysine--tRNA ligase (500 aa).

Glu410 and Glu417 together coordinate Mg(2+).

Belongs to the class-II aminoacyl-tRNA synthetase family. As to quaternary structure, homodimer. Mg(2+) serves as cofactor.

The protein resides in the cytoplasm. The catalysed reaction is tRNA(Lys) + L-lysine + ATP = L-lysyl-tRNA(Lys) + AMP + diphosphate. In Pseudomonas savastanoi pv. phaseolicola (strain 1448A / Race 6) (Pseudomonas syringae pv. phaseolicola (strain 1448A / Race 6)), this protein is Lysine--tRNA ligase.